A 208-amino-acid chain; its full sequence is Guanylate kinase (208 aa).

The 180-residue stretch at 8 to 187 folds into the Guanylate kinase-like domain; that stretch reads GVCLVISAPS…AISQARSVLT (180 aa). Residue 15–22 coordinates ATP; that stretch reads APSGAGKS.

Belongs to the guanylate kinase family.

It is found in the cytoplasm. The enzyme catalyses GMP + ATP = GDP + ADP. Functionally, essential for recycling GMP and indirectly, cGMP. The chain is Guanylate kinase from Gluconobacter oxydans (strain 621H) (Gluconobacter suboxydans).